Consider the following 514-residue polypeptide: Ribonuclease Y (514 aa).

Residues 3 to 23 (VLWMVLGLAIGIAVGAAAGYI) traverse the membrane as a helical segment. The KH domain occupies 203–266 (TVKAVELPSD…EVARIAMERL (64 aa)). The HD domain maps to 330 to 423 (VLAHSVEVAN…VATADAVSAA (94 aa)).

It belongs to the RNase Y family.

It localises to the cell membrane. Functionally, endoribonuclease that initiates mRNA decay. The sequence is that of Ribonuclease Y from Rubrobacter xylanophilus (strain DSM 9941 / JCM 11954 / NBRC 16129 / PRD-1).